The chain runs to 296 residues: Tubulin polyglutamylase complex subunit 2 (296 aa).

A compositionally biased stretch (basic residues) spans 254–265; that stretch reads SKNKILIPKKKG. Residues 254–296 form a disordered region; the sequence is SKNKILIPKKKGPVPPASGQKGPGPLPPPTSKPTTGSGNPVRK. Residues 285–296 are compositionally biased toward low complexity; the sequence is KPTTGSGNPVRK.

Part of the neuronal tubulin polyglutamylase complex which contains TPGS1, TPGS2, TTLL1, LRRC49 and NICN1. Interacts with CSTPP1 and LRRC49.

It is found in the cytoplasm. The protein resides in the cytoskeleton. It localises to the microtubule organizing center. The protein localises to the centrosome. Its subcellular location is the centriolar satellite. Functionally, subunit of the tubulin polyglutamylase complex (TPGC). The complex mediates cilia and flagella polyglutamylation which is essential for their biogenesis and motility. In Mus musculus (Mouse), this protein is Tubulin polyglutamylase complex subunit 2 (Tpgs2).